Reading from the N-terminus, the 224-residue chain is Metalloproteinase inhibitor 4 (224 aa).

Residues 1–29 (MPQSPRPVPSWALLLRLLALLRPPGLGEA) form the signal peptide. Cysteine 30 is a binding site for Zn(2+). 2 involved in metalloproteinase-binding regions span residues 30–33 (CSCA) and 99–100 (SS). Intrachain disulfides connect cysteine 30–cysteine 102, cysteine 32–cysteine 131, cysteine 42–cysteine 156, cysteine 158–cysteine 205, cysteine 163–cysteine 168, and cysteine 176–cysteine 197. Residues 30–156 (CSCAPAHPQQ…SLNHHYHLNC (127 aa)) enclose the NTR domain.

It belongs to the protease inhibitor I35 (TIMP) family.

Its subcellular location is the secreted. In terms of biological role, complexes with metalloproteinases (such as collagenases) and irreversibly inactivates them by binding to their catalytic zinc cofactor. This is Metalloproteinase inhibitor 4 (TIMP4) from Bos taurus (Bovine).